A 508-amino-acid polypeptide reads, in one-letter code: MWELVALLLLTLAYLFWPKRRCPGAKYPKSLLSLPLVGSLPFLPRHGHMHNNFFKLQKKYGPIYSVRMGTKTTVIVGHHQLAKEVLIKKGKDFSGRPQVTTLDILSNNRKGIAFADYGAHWQLHRRLAMATFALFKDGDQKLEKIICQEISTLCDMLATHNGQTIDISFPVFVAITNVISLICFNISYKNGDPELKIVHNYNEGIIDSLGKESLVDLFPWLKVFPNKTLEKLKRHVKTRNDLLTKIFENYKEKFRSDSITNMLDVLMQAKMNSDNGNAGPDQDSELLSDNHILTTIGDIFGAGVETTTSVVKWIVAFLLHNPQVKKKLYEEIDQNVGFSRTPTISDRNRLLLLEATIREVLRIRPVAPMLIPHKANVDSSIGEFAVDKGTHVIINLWALHHNEKEWHQPDQFMPERFLNPAGTQLISPSLSYLPFGAGPRSCIGEILARQELFLIMAWLLQRFDLEVPDDGQLPSLEGNPKVVFLIDSFKVKIKVRQAWREAQAEGST.

Asn202 provides a ligand contact to substrate. Position 442 (Cys442) interacts with heme.

Belongs to the cytochrome P450 family. The cofactor is heme.

It is found in the endoplasmic reticulum membrane. The protein resides in the microsome membrane. The catalysed reaction is a C21-steroid + reduced [NADPH--hemoprotein reductase] + O2 = a 17alpha-hydroxy-C21-steroid + oxidized [NADPH--hemoprotein reductase] + H2O + H(+). The enzyme catalyses progesterone + reduced [NADPH--hemoprotein reductase] + O2 = 17alpha-hydroxyprogesterone + oxidized [NADPH--hemoprotein reductase] + H2O + H(+). It carries out the reaction pregnenolone + reduced [NADPH--hemoprotein reductase] + O2 = 17alpha-hydroxypregnenolone + oxidized [NADPH--hemoprotein reductase] + H2O + H(+). It catalyses the reaction 17alpha-hydroxyprogesterone + reduced [NADPH--hemoprotein reductase] + O2 = androst-4-ene-3,17-dione + acetate + oxidized [NADPH--hemoprotein reductase] + H2O + 2 H(+). The catalysed reaction is 17alpha-hydroxyprogesterone + reduced [NADPH--hemoprotein reductase] + O2 = 16alpha,17alpha-dihydroxyprogesterone + oxidized [NADPH--hemoprotein reductase] + H2O + H(+). The enzyme catalyses 16alpha,17alpha-dihydroxyprogesterone + reduced [NADPH--hemoprotein reductase] + O2 = 6beta,16alpha,17alpha-trihydroxyprogesterone + oxidized [NADPH--hemoprotein reductase] + H2O + H(+). It carries out the reaction 17alpha-hydroxypregnenolone + reduced [NADPH--hemoprotein reductase] + O2 = 3beta-hydroxyandrost-5-en-17-one + acetate + oxidized [NADPH--hemoprotein reductase] + H2O + 2 H(+). It catalyses the reaction 16alpha,17alpha-dihydroxypregnenolone + reduced [NADPH--hemoprotein reductase] + O2 = 3beta,16alpha-dihydroxy-androst-5-en-17-one + acetate + oxidized [NADPH--hemoprotein reductase] + H2O + 2 H(+). The catalysed reaction is 3beta-hydroxyandrost-5-en-17-one + reduced [NADPH--hemoprotein reductase] + O2 = 3beta,16alpha-dihydroxy-androst-5-en-17-one + oxidized [NADPH--hemoprotein reductase] + H2O + H(+). The enzyme catalyses androst-4-ene-3,17-dione + reduced [NADPH--hemoprotein reductase] + O2 = 16alpha-hydroxyandrost-4-ene-3,17-dione + oxidized [NADPH--hemoprotein reductase] + H2O + H(+). It participates in steroid hormone biosynthesis. The protein operates within steroid biosynthesis; glucocorticoid biosynthesis. Regulated predominantly by intracellular cAMP levels. The 17,20-lyase activity is stimulated by cytochrome b5, which acts as an allosteric effector increasing the Vmax of the lyase activity. In terms of biological role, a cytochrome P450 monooxygenase involved in corticoid and androgen biosynthesis. Catalyzes 17-alpha hydroxylation of C21 steroids, which is common for both pathways. A second oxidative step, required only for androgen synthesis, involves an acyl-carbon cleavage. The 17-alpha hydroxy intermediates, as part of adrenal glucocorticoids biosynthesis pathway, are precursors of cortisol. Hydroxylates steroid hormones, pregnenolone and progesterone to form 17-alpha hydroxy metabolites, followed by the cleavage of the C17-C20 bond to form C19 steroids, dehydroepiandrosterone (DHEA) and androstenedione. Has 16-alpha hydroxylase activity. Catalyzes 16-alpha hydroxylation of 17-alpha hydroxy pregnenolone, followed by the cleavage of the C17-C20 bond to form 16-alpha-hydroxy DHEA. Also 16-alpha hydroxylates androgens, relevant for estriol synthesis. Mechanistically, uses molecular oxygen inserting one oxygen atom into a substrate, and reducing the second into a water molecule, with two electrons provided by NADPH via cytochrome P450 reductase (CPR; NADPH-ferrihemoprotein reductase). The polypeptide is Steroid 17-alpha-hydroxylase/17,20 lyase (CYP17A1) (Papio cynocephalus (Yellow baboon)).